A 246-amino-acid polypeptide reads, in one-letter code: Large ribosomal subunit protein uL2 (246 aa).

Positions 197-227 are disordered; the sequence is SPYAHPHGGGSHQKGGTPVPKTAPPGQKVGF.

This sequence belongs to the universal ribosomal protein uL2 family. As to quaternary structure, part of the 50S ribosomal subunit. Forms a bridge to the 30S subunit in the 70S ribosome.

In terms of biological role, one of the primary rRNA binding proteins. Required for association of the 30S and 50S subunits to form the 70S ribosome, for tRNA binding and peptide bond formation. It has been suggested to have peptidyltransferase activity; this is somewhat controversial. Makes several contacts with the 16S rRNA in the 70S ribosome. The sequence is that of Large ribosomal subunit protein uL2 from Pyrobaculum aerophilum (strain ATCC 51768 / DSM 7523 / JCM 9630 / CIP 104966 / NBRC 100827 / IM2).